Here is a 296-residue protein sequence, read N- to C-terminus: Formamidopyrimidine-DNA glycosylase (296 aa).

Residue proline 2 is the Schiff-base intermediate with DNA of the active site. Glutamate 3 (proton donor) is an active-site residue. Lysine 61 acts as the Proton donor; for beta-elimination activity in catalysis. Histidine 95, arginine 122, and lysine 169 together coordinate DNA. Residues 255 to 289 form an FPG-type zinc finger; that stretch reads NAYGRNDQPCARCGTPIQRETFMNRSSYSCPRCQP. Arginine 279 serves as the catalytic Proton donor; for delta-elimination activity.

The protein belongs to the FPG family. Monomer. Zn(2+) serves as cofactor.

It carries out the reaction Hydrolysis of DNA containing ring-opened 7-methylguanine residues, releasing 2,6-diamino-4-hydroxy-5-(N-methyl)formamidopyrimidine.. It catalyses the reaction 2'-deoxyribonucleotide-(2'-deoxyribose 5'-phosphate)-2'-deoxyribonucleotide-DNA = a 3'-end 2'-deoxyribonucleotide-(2,3-dehydro-2,3-deoxyribose 5'-phosphate)-DNA + a 5'-end 5'-phospho-2'-deoxyribonucleoside-DNA + H(+). Its function is as follows. Involved in base excision repair of DNA damaged by oxidation or by mutagenic agents. Acts as a DNA glycosylase that recognizes and removes damaged bases. Has a preference for oxidized purines, such as 7,8-dihydro-8-oxoguanine (8-oxoG). Has AP (apurinic/apyrimidinic) lyase activity and introduces nicks in the DNA strand. Cleaves the DNA backbone by beta-delta elimination to generate a single-strand break at the site of the removed base with both 3'- and 5'-phosphates. This chain is Formamidopyrimidine-DNA glycosylase, found in Thermobifida fusca (strain YX).